The primary structure comprises 242 residues: MTTVSMRDMLQAGVHFGHQTRYWNPKMKPFIFGARNGVHIINLEHTVPMFNEALAFISNIASKKGKVLFVGTKRAASEAIKEAAVSCDQFYVDHRWLGGMLTNWKTVRQSIKRLKDLESQSIDGTFDKLTKKEALMRTRELEKLEKSLGGIKNMAGLPDVIFVIGADHEHIAIKEANNLGIPVVAVVDTNSSPDGINYIIPGNDDAMRSIRLYTESVATAAKAGRNQDLAVQAEQDGFVEAE.

This sequence belongs to the universal ribosomal protein uS2 family.

This chain is Small ribosomal subunit protein uS2, found in Shewanella piezotolerans (strain WP3 / JCM 13877).